Consider the following 501-residue polypeptide: L-ornithine N(5)-monooxygenase (501 aa).

The interval 1–31 (MESVERKSESSYLGMRNMQPEQRLSLDPPRL) is disordered. Residues 83 to 91 (ERQKQFAWH) and glutamine 102 contribute to the FAD site. Lysine 107 serves as a coordination point for substrate. Valine 168 contributes to the FAD binding site. Residues 254–257 (SGQS) and arginine 279 each bind NADP(+). Residues 293 to 296 (NEIF) and asparagine 323 each bind substrate. 323 to 325 (NYS) contributes to the NADP(+) binding site. Residues 366 to 390 (EHHGPQSRMRIHLKSSKPESEGAAN) form a disordered region. Basic and acidic residues predominate over residues 381 to 390 (SKPESEGAAN). 466 to 468 (SLL) lines the FAD pocket. Serine 469 lines the substrate pocket.

The protein belongs to the lysine N(6)-hydroxylase/L-ornithine N(5)-oxygenase family. In terms of assembly, homotetramer. It depends on FAD as a cofactor.

It catalyses the reaction L-ornithine + NADPH + O2 = N(5)-hydroxy-L-ornithine + NADP(+) + H2O. The catalysed reaction is L-ornithine + NADH + O2 = N(5)-hydroxy-L-ornithine + NAD(+) + H2O. Its pathway is siderophore biosynthesis; ferrichrome biosynthesis. L-ornithine N(5)-monooxygenase; part of the siderophore biosynthetic pathway. Aspergillus fumigatus produces four types of siderophores, low-molecular-mass iron chelators, including excreted fusarinine C (FsC) and triacetylfusarinine C (TAFC) for iron uptake; and intacellular ferricrocin (FC) for hyphal and hydroxyferricrocin (HFC) for conidial iron distribution and storage. TAFC consists of three N(2)-acetyl-N(5)-anhydromevalonyl-N(5)-hydroxyornithine residues cyclically linked by ester bonds; FC is a cyclic hexapeptide with the structure Gly-Ser-Gly-(N(5)-acetyl-N(5)-hydroxyornithine)x3. The biosynthesis of all four siderophores depends on the hydroxylation of ornithine, catalyzed by the monooxygenase sidA. SidA is highly specific for its substrate, only hydrolyzing l-ornithine, and has preference for NADPH over NADH, NADPH playing a role in stabilization of the C4a-hydroperoxyflavin intermediate. Subsequently, the pathways for biosynthesis of extra- and intracellular siderophores split. For biosynthesis of extracellular siderophores, the transacylase sidF transfers anhydromevalonyl to N(5)-hydroxyornithine. The required anhydromevalonyl-CoA moiety is derived from mevalonate by CoA ligation and dehydration catalyzed by sidI and sidH respectively. The acetylation of N(5)-hydroxyornithine for FC biosynthesis involves the constitutively expressed sidL. FC is hydroxylated to HFC by an as yet uncharacterized enzyme during conidiation. Assembly of fusarinine C (FsC) and FC is catalyzed by two different nonribosomal peptide synthetases (NRPS), sidD and sidC respectively. Subsequently, sidG catalyzes N2-acetylation of FsC for forming TAFC. Both extra- and intracellular siderophores are crucial for growth during iron limitation and virulence. This is L-ornithine N(5)-monooxygenase from Aspergillus fumigatus (strain ATCC MYA-4609 / CBS 101355 / FGSC A1100 / Af293) (Neosartorya fumigata).